We begin with the raw amino-acid sequence, 473 residues long: tRNA modification GTPase MnmE (473 aa).

Residues R30, E95, and R134 each coordinate (6S)-5-formyl-5,6,7,8-tetrahydrofolate. In terms of domain architecture, TrmE-type G spans 230–394 (GVSTVIAGRP…LKLLMASMVE (165 aa)). Residues 240-245 (NAGKST), 259-265 (SHMPGTT), and 284-287 (DTAG) each bind GTP. Positions 244 and 265 each coordinate Mg(2+). K473 is a binding site for (6S)-5-formyl-5,6,7,8-tetrahydrofolate.

The protein belongs to the TRAFAC class TrmE-Era-EngA-EngB-Septin-like GTPase superfamily. TrmE GTPase family. Homodimer. Heterotetramer of two MnmE and two MnmG subunits. It depends on K(+) as a cofactor.

It localises to the cytoplasm. Exhibits a very high intrinsic GTPase hydrolysis rate. Involved in the addition of a carboxymethylaminomethyl (cmnm) group at the wobble position (U34) of certain tRNAs, forming tRNA-cmnm(5)s(2)U34. This is tRNA modification GTPase MnmE from Chlorobium luteolum (strain DSM 273 / BCRC 81028 / 2530) (Pelodictyon luteolum).